Here is a 268-residue protein sequence, read N- to C-terminus: NH(3)-dependent NAD(+) synthetase (268 aa).

45-52 serves as a coordination point for ATP; it reads GLSGGIDS. Asp-51 provides a ligand contact to Mg(2+). Arg-129 provides a ligand contact to deamido-NAD(+). Thr-149 is a binding site for ATP. Residue Glu-154 participates in Mg(2+) binding. Positions 162 and 169 each coordinate deamido-NAD(+). Residues Lys-178 and Thr-200 each coordinate ATP. 260-261 provides a ligand contact to deamido-NAD(+); the sequence is HK.

Belongs to the NAD synthetase family. In terms of assembly, homodimer.

The enzyme catalyses deamido-NAD(+) + NH4(+) + ATP = AMP + diphosphate + NAD(+) + H(+). Its pathway is cofactor biosynthesis; NAD(+) biosynthesis; NAD(+) from deamido-NAD(+) (ammonia route): step 1/1. In terms of biological role, catalyzes the ATP-dependent amidation of deamido-NAD to form NAD. Uses ammonia as a nitrogen source. The sequence is that of NH(3)-dependent NAD(+) synthetase from Halobacterium salinarum (strain ATCC 29341 / DSM 671 / R1).